Here is a 1131-residue protein sequence, read N- to C-terminus: Plasma membrane ATPase (1131 aa).

A run of 6 helical transmembrane segments spans residues 77–97, 98–118, 151–171, 231–251, 265–285, and 305–325; these read PVLV…EAAA, IISI…LLLI, GAIV…LIRL, AVVY…LISG, MSAI…AVQF, and MLVV…SVTL. The active-site 4-aspartylphosphate intermediate is aspartate 357. Mg(2+) is bound by residues aspartate 615 and aspartate 619. A run of 5 helical transmembrane segments spans residues 642-662, 689-709, 733-753, 884-904, and 946-966; these read AADI…VIGA, LITV…MAVF, ITNI…STWA, LAFF…LGGF, and VIGC…WYVL. Basic and acidic residues predominate over residues 994 to 1010; the sequence is KRSLDRRSKDDIGDKEF. Disordered regions lie at residues 994-1023 and 1067-1131; these read KRSL…NYSN and RRSM…TIRE. Positions 1089 to 1100 are enriched in polar residues; sequence SRTSNTLSTGSK. Over residues 1118–1131 the composition is skewed to basic and acidic residues; it reads IKPDKYDFASTIRE.

The protein belongs to the cation transport ATPase (P-type) (TC 3.A.3) family. Type IIIA subfamily.

It localises to the cell membrane. The catalysed reaction is ATP + H2O + H(+)(in) = ADP + phosphate + 2 H(+)(out). Functionally, the plasma membrane ATPase of plants and fungi is a hydrogen ion pump. The proton gradient it generates drives the active transport of nutrients by H(+)-symport. The resulting external acidification and/or internal alkinization may mediate growth responses. The sequence is that of Plasma membrane ATPase (PMA1) from Dunaliella bioculata (Green alga).